The chain runs to 67 residues: Retron Se72 cold shock-like protein (67 aa).

The CSD domain maps to Met-1–Lys-66.

Probable cold shock-like component of antiviral defense system retron Se72, composed of a non-coding RNA (ncRNA), a reverse transcriptase (RT) and this protein. Expression of retron Se72 confers protection against bacteriophage lambda. At multiplicity of infection (MOI) of 0.02 cultures slow growth when infected with lambda but do not collapse, at MOI 2 cultures enter growth stasis. In Salmonella heidelberg (strain 579083-10), this protein is Retron Se72 cold shock-like protein.